The primary structure comprises 85 residues: Toxin AahP1005 (85 aa).

A signal peptide spans 1-19 (MNYLVMISLALLFMTGVES). The LCN-type CS-alpha/beta domain occupies 21–83 (KDGYIVDDKN…VSTKKKGGCN (63 aa)). Intrachain disulfides connect Cys31/Cys82, Cys35/Cys55, Cys41/Cys65, and Cys45/Cys67. Asn83 carries the post-translational modification Asparagine amide.

This sequence belongs to the long (4 C-C) scorpion toxin superfamily. Sodium channel inhibitor family. Alpha subfamily. In terms of tissue distribution, expressed by the venom gland.

The protein localises to the secreted. Its function is as follows. Alpha toxins bind voltage-independently at site-3 of sodium channels (Nav) and inhibit the inactivation of the activated channels, thereby blocking neuronal transmission. In Androctonus australis (Sahara scorpion), this protein is Toxin AahP1005.